We begin with the raw amino-acid sequence, 351 residues long: THO complex subunit 3 (351 aa).

A disordered region spans residues 1–20; it reads MAVPAAAMGPSALGQSGPGS. Position 2 is an N-acetylalanine (A2). 6 WD repeats span residues 53–94, 97–137, 139–178, 180–221, 222–261, and 264–303; these read AHSA…KENN, GHGD…CIAT, NTKG…SKAE, QFKF…QSIN, AHPS…CVRC, and RLDW…KLWE.

This sequence belongs to the THOC3 family. As to quaternary structure, component of the THO subcomplex, which is composed of THOC1, THOC2, THOC3, THOC5, THOC6 and THOC7. The THO subcomplex interacts with DDX39B to form the THO-DDX39B complex which multimerizes into a 28-subunit tetrameric assembly. Component of the transcription/export (TREX) complex at least composed of ALYREF/THOC4, DDX39B, SARNP/CIP29, CHTOP and the THO subcomplex; in the complex interacts with THOC2. TREX seems to have a dynamic structure involving ATP-dependent remodeling.

The protein localises to the nucleus. Its subcellular location is the nucleus speckle. Its function is as follows. Component of the THO subcomplex of the TREX complex which is thought to couple mRNA transcription, processing and nuclear export, and which specifically associates with spliced mRNA and not with unspliced pre-mRNA. Required for efficient export of polyadenylated RNA and spliced mRNA. The THOC1-THOC2-THOC3 core complex alone is sufficient to bind export factor NXF1-NXT1 and promote ATPase activity of DDX39B. TREX is recruited to spliced mRNAs by a transcription-independent mechanism, binds to mRNA upstream of the exon-junction complex (EJC) and is recruited in a splicing- and cap-dependent manner to a region near the 5' end of the mRNA where it functions in mRNA export to the cytoplasm via the TAP/NXF1 pathway. Functionally, (Microbial infection) The TREX complex is essential for the export of Kaposi's sarcoma-associated herpesvirus (KSHV) intronless mRNAs and infectious virus production. The sequence is that of THO complex subunit 3 (THOC3) from Homo sapiens (Human).